A 477-amino-acid polypeptide reads, in one-letter code: Glycogen synthase (477 aa).

Position 16 (Lys-16) interacts with ADP-alpha-D-glucose.

It belongs to the glycosyltransferase 1 family. Bacterial/plant glycogen synthase subfamily.

It catalyses the reaction [(1-&gt;4)-alpha-D-glucosyl](n) + ADP-alpha-D-glucose = [(1-&gt;4)-alpha-D-glucosyl](n+1) + ADP + H(+). Its pathway is glycan biosynthesis; glycogen biosynthesis. In terms of biological role, synthesizes alpha-1,4-glucan chains using ADP-glucose. The protein is Glycogen synthase of Oceanobacillus iheyensis (strain DSM 14371 / CIP 107618 / JCM 11309 / KCTC 3954 / HTE831).